Here is a 442-residue protein sequence, read N- to C-terminus: Lipoyl synthase, apicoplast (442 aa).

The first 25 residues, 1 to 25 (MHVLTPSLYIYAFFIVCVRLKCGRS), serve as a signal peptide directing secretion. A disordered region spans residues 92-154 (LLRSESATDE…EKKPDWFHVP (63 aa)). The segment covering 109-127 (LKEKLKESPANWGKDKQEE) has biased composition (basic and acidic residues). [4Fe-4S] cluster-binding residues include cysteine 177, cysteine 182, cysteine 188, cysteine 203, cysteine 207, cysteine 210, and serine 418. Residues 189–407 (WNIGTATIML…KEEGMKMGFK (219 aa)) form the Radical SAM core domain.

It belongs to the radical SAM superfamily. Lipoyl synthase family. It depends on [4Fe-4S] cluster as a cofactor.

It localises to the plastid. Its subcellular location is the apicoplast. It carries out the reaction [[Fe-S] cluster scaffold protein carrying a second [4Fe-4S](2+) cluster] + N(6)-octanoyl-L-lysyl-[protein] + 2 oxidized [2Fe-2S]-[ferredoxin] + 2 S-adenosyl-L-methionine + 4 H(+) = [[Fe-S] cluster scaffold protein] + N(6)-[(R)-dihydrolipoyl]-L-lysyl-[protein] + 4 Fe(3+) + 2 hydrogen sulfide + 2 5'-deoxyadenosine + 2 L-methionine + 2 reduced [2Fe-2S]-[ferredoxin]. The protein operates within protein modification; protein lipoylation via endogenous pathway; protein N(6)-(lipoyl)lysine from octanoyl-[acyl-carrier-protein]: step 2/2. Functionally, catalyzes the radical-mediated insertion of two sulfur atoms into the C-6 and C-8 positions of the octanoyl moiety bound to the lipoyl domains of lipoate-dependent enzymes, thereby converting the octanoylated domains into lipoylated derivatives. The chain is Lipoyl synthase, apicoplast from Plasmodium vivax (strain Salvador I).